The chain runs to 98 residues: Integration host factor subunit alpha (98 aa).

The protein belongs to the bacterial histone-like protein family. Heterodimer of an alpha and a beta chain.

In terms of biological role, this protein is one of the two subunits of integration host factor, a specific DNA-binding protein that functions in genetic recombination as well as in transcriptional and translational control. The polypeptide is Integration host factor subunit alpha (Actinobacillus pleuropneumoniae serotype 5b (strain L20)).